Here is a 450-residue protein sequence, read N- to C-terminus: MRECISVHVGQAGVQIGNACWELYCLEHGIQPDGQMPSDKTIGTGDDSFNTFFSETGSGKHVPRAVYVDLEPTVVDEVRTGTYRQLFHPEQLITGKEDAANNYARGHYTIGKEIVDVVLDRIRKLSDQCTGLQGFLIFHSFGGGTGSGFTSLLMERLSVDYGKKSKLEFAVYPAPQVSTAVVEPYNSILTTHTTLEHSDCAFMVDNEAIYDICRRNLDIERPTYTNLNRLIGQIVSSITASLRFDGALNVELTEFQTNLVPYPRIHFPLVTYSPVISAEKAYHEQLTVAEITNTCFEPQNQMVKCDPRHGKYMACCLLYRGDVVPKDVNAAIAGIKTKRSIQFVDWCPTGFKVGINYQPPTVVPGGDLAKVQRAVCMLSNTTAIAEAWARLDHKFDLMYAKRAFVHWYVGEGMEEGEFSEAREDLAALEKDYEEVGLDSTEAEGGDGEEF.

Residue Gln-11 participates in GTP binding. Position 40 is an N6-acetyllysine (Lys-40). The GTP site is built by Glu-71, Ser-140, Gly-144, Thr-145, Thr-179, Asn-206, and Asn-228. Glu-71 provides a ligand contact to Mg(2+). Glu-254 is an active-site residue.

Belongs to the tubulin family. In terms of assembly, dimer of alpha and beta chains. A typical microtubule is a hollow water-filled tube with an outer diameter of 25 nm and an inner diameter of 15 nM. Alpha-beta heterodimers associate head-to-tail to form protofilaments running lengthwise along the microtubule wall with the beta-tubulin subunit facing the microtubule plus end conferring a structural polarity. Microtubules usually have 13 protofilaments but different protofilament numbers can be found in some organisms and specialized cells. Mg(2+) serves as cofactor. Post-translationally, acetylation of alpha chains at Lys-40 stabilizes microtubules and affects affinity and processivity of microtubule motors. This modification has a role in multiple cellular functions, ranging from cell motility, cell cycle progression or cell differentiation to intracellular trafficking and signaling.

Its subcellular location is the cytoplasm. It is found in the cytoskeleton. The enzyme catalyses GTP + H2O = GDP + phosphate + H(+). Functionally, tubulin is the major constituent of microtubules, a cylinder consisting of laterally associated linear protofilaments composed of alpha- and beta-tubulin heterodimers. Microtubules grow by the addition of GTP-tubulin dimers to the microtubule end, where a stabilizing cap forms. Below the cap, tubulin dimers are in GDP-bound state, owing to GTPase activity of alpha-tubulin. The sequence is that of Tubulin alpha chain from Tyrophagus putrescentiae (Mold mite).